A 255-amino-acid chain; its full sequence is Electron transfer flavoprotein subunit beta (255 aa).

Alanine 2 is modified (N-acetylalanine). Residues alanine 9, 39 to 42 (NPFC), cysteine 66, and 123 to 134 (GKQAIDDDCNQT) each bind AMP. The tract at residues 183 to 205 (ADLRLNEPRYATLPNIMKAKKKK) is recognition loop. Lysine 200 carries the N6,N6,N6-trimethyllysine; by ETFBKMT; alternate modification. Lysine 200 is modified (N6-acetyllysine; alternate). Lysine 200 carries the post-translational modification N6-methyllysine; alternate. Lysine 203 is subject to N6,N6,N6-trimethyllysine; by ETFBKMT. Residue lysine 210 is modified to N6-acetyllysine; alternate. Lysine 210 carries the N6-succinyllysine; alternate modification. 2 positions are modified to phosphoserine: serine 223 and serine 226. Position 238 is an N6-acetyllysine (lysine 238). Position 248 is an N6-acetyllysine; alternate (lysine 248). Lysine 248 carries the post-translational modification N6-succinyllysine; alternate.

It belongs to the ETF beta-subunit/FixA family. In terms of assembly, heterodimer composed of ETFA and ETFB. Identified in a complex that contains ETFA, ETFB and ETFRF1. Interacts with ACADM. Methylated. Trimethylation at Lys-200 and Lys-203 may negatively regulate the activity in electron transfer from acyl-CoA dehydrogenases.

The protein localises to the mitochondrion matrix. In terms of biological role, heterodimeric electron transfer flavoprotein that accepts electrons from several mitochondrial dehydrogenases, including acyl-CoA dehydrogenases, glutaryl-CoA and sarcosine dehydrogenase. It transfers the electrons to the main mitochondrial respiratory chain via ETF-ubiquinone oxidoreductase. Required for normal mitochondrial fatty acid oxidation and normal amino acid metabolism. ETFB binds an AMP molecule that probably has a purely structural role. In Bos taurus (Bovine), this protein is Electron transfer flavoprotein subunit beta.